The primary structure comprises 215 residues: Ras-related protein Rab-5A (215 aa).

Ser-29, Ala-30, Gly-32, Lys-33, Ser-34, Ser-35, His-46, Glu-47, Thr-52, and Gly-78 together coordinate GTP. Residue Ser-34 coordinates Mg(2+). 2 short sequence motifs (switch) span residues 44–56 (QFHEFQESTIGAA) and 77–93 (AGQERYHSLAPMYYRGA). Thr-52 serves as a coordination point for Mg(2+). A Phosphoserine; by LRRK2 modification is found at Ser-84. A (Microbial infection) N-beta-linked (GlcNAc) arginine glycan is attached at Arg-120. Residues Asn-133, Lys-134, Asp-136, Ala-164, and Lys-165 each contribute to the GTP site. Residues 181 to 215 (LPKNEPQNPGANSARGRGVDLTEPTQPTRNQCCSN) are disordered. A compositionally biased stretch (polar residues) spans 203 to 215 (EPTQPTRNQCCSN). S-geranylgeranyl cysteine attachment occurs at residues Cys-212 and Cys-213.

Belongs to the small GTPase superfamily. Rab family. In terms of assembly, interacts with SGSM1 and SGSM3. Interacts with PIK3CB. Interacts with GDI1; this promotes dissociation from membranes; phosphorylation at Ser-84 disrupts this interaction. Interacts with GDI2; phosphorylation at Ser-84 disrupts the interaction. Interacts with EEA1. Interacts with RIN1 and GAPVD1, which regulate its pathway, probably by acting as a GEF. Interacts with RINL. Interacts with ALS2CL, SUN2, ZFYVE20 and RUFY1. Interacts with RABEP1; one RABEP1 homodimer binds two RAB5A chains, but at opposite sides of the dimer. Interacts with OCRL. Interacts with INPP5F. May be a component of a complex composed of RAB5A, DYN2 and PIK3C3. Does not interact with BLOC-3 complex (heterodimer of HPS1 and HPS4). Interacts with CLN5. Interacts with APPL2. Interacts with F8A1/F8A2/F8A3. Found in a complex with F8A1/F8A2/F8A3, HTT and RAB5A; mediates the recruitment of HTT by RAB5A onto early endosomes. Interacts with ATP9A. Interacts with PPP1R21; mediates the recruitment of FERRY complex by RAB5A onto early endosomes. It depends on Mg(2+) as a cofactor. Phosphorylation of Ser-84 in the switch II region by LRRK2 prevents the association of RAB regulatory proteins, including RAB GDP dissociation inhibitors GDI1 and GDI2. Post-translationally, (Microbial infection) Glycosylated on arginine residues by S.typhimurium protein Ssek3.

It localises to the cell membrane. Its subcellular location is the early endosome membrane. It is found in the melanosome. The protein localises to the cytoplasmic vesicle. The protein resides in the cell projection. It localises to the ruffle. Its subcellular location is the membrane. It is found in the cytoplasm. The protein localises to the cytosol. The protein resides in the phagosome membrane. It localises to the endosome membrane. The enzyme catalyses GTP + H2O = GDP + phosphate + H(+). Its activity is regulated as follows. Regulated by guanine nucleotide exchange factors (GEFs) including RINL, which promote the exchange of bound GDP for free GTP. Regulated by GTPase activating proteins (GAPs) which increase the GTP hydrolysis activity. Inhibited by GDP dissociation inhibitors (GDIs). In terms of biological role, the small GTPases Rab are key regulators of intracellular membrane trafficking, from the formation of transport vesicles to their fusion with membranes. Rabs cycle between an inactive GDP-bound form and an active GTP-bound form that is able to recruit to membranes different sets of downstream effectors directly responsible for vesicle formation, movement, tethering and fusion. RAB5A is required for the fusion of plasma membranes and early endosomes. Contributes to the regulation of filopodia extension. Required for the exosomal release of SDCBP, CD63, PDCD6IP and syndecan. Regulates maturation of apoptotic cell-containing phagosomes, probably downstream of DYN2 and PIK3C3. The chain is Ras-related protein Rab-5A from Homo sapiens (Human).